Here is a 420-residue protein sequence, read N- to C-terminus: uncharacterized protein (420 aa).

An N-terminal signal peptide occupies residues 1–25 (MRYAMNKIPALLLVGALIIATVASG). An N-acetylcysteine modification is found at Cys26. Cys26 carries the S-archaeol cysteine lipid modification.

Belongs to the bacterial solute-binding protein 1 family.

It is found in the cell membrane. Its function is as follows. Probably part of a binding-protein-dependent transport system PH1036/38/39. This is an uncharacterized protein from Pyrococcus horikoshii (strain ATCC 700860 / DSM 12428 / JCM 9974 / NBRC 100139 / OT-3).